Reading from the N-terminus, the 70-residue chain is Large ribosomal subunit protein eL38 (70 aa).

This sequence belongs to the eukaryotic ribosomal protein eL38 family.

The chain is Large ribosomal subunit protein eL38 (RPL38) from Artemia franciscana (Brine shrimp).